The following is a 65-amino-acid chain: Beta-defensin 106A (65 aa).

The N-terminal stretch at 1 to 20 (MRTFLFLFVVLFFLTPAKNA) is a signal peptide. Cystine bridges form between Cys-26–Cys-53, Cys-33–Cys-47, and Cys-37–Cys-54.

Belongs to the beta-defensin family. Monomer. Interacts with CCR2 (via extracellular N-terminal region); this interaction may preferentially require specific tyrosine sulfation on CCR2.

It is found in the secreted. Its subcellular location is the membrane. Has antibacterial activity. Acts as a ligand for C-C chemokine receptor CCR2. In Hylobates lar (Lar gibbon), this protein is Beta-defensin 106A (DEFB106A).